Here is a 431-residue protein sequence, read N- to C-terminus: Adenylosuccinate synthetase (431 aa).

GTP-binding positions include 12–18 (GDEGKGK) and 40–42 (GHT). Aspartate 13 functions as the Proton acceptor in the catalytic mechanism. Positions 13 and 40 each coordinate Mg(2+). IMP-binding positions include 13–16 (DEGK), 38–41 (NAGH), threonine 130, arginine 144, glutamine 225, threonine 240, and arginine 304. Histidine 41 acts as the Proton donor in catalysis. 300-306 (ATTGRPR) is a substrate binding site. GTP is bound by residues arginine 306, 332–334 (KLD), and 414–416 (SVG).

This sequence belongs to the adenylosuccinate synthetase family. Homodimer. The cofactor is Mg(2+).

Its subcellular location is the cytoplasm. The catalysed reaction is IMP + L-aspartate + GTP = N(6)-(1,2-dicarboxyethyl)-AMP + GDP + phosphate + 2 H(+). The protein operates within purine metabolism; AMP biosynthesis via de novo pathway; AMP from IMP: step 1/2. Its function is as follows. Plays an important role in the de novo pathway of purine nucleotide biosynthesis. Catalyzes the first committed step in the biosynthesis of AMP from IMP. The protein is Adenylosuccinate synthetase of Geotalea uraniireducens (strain Rf4) (Geobacter uraniireducens).